Consider the following 398-residue polypeptide: 1-deoxy-D-xylulose 5-phosphate reductoisomerase (398 aa).

8 residues coordinate NADPH: T10, G11, S12, V13, G36, K37, N38, and N124. K125 contacts 1-deoxy-D-xylulose 5-phosphate. E126 is an NADPH binding site. Position 150 (D150) interacts with Mn(2+). 4 residues coordinate 1-deoxy-D-xylulose 5-phosphate: S151, E152, S186, and H209. E152 lines the Mn(2+) pocket. G215 is a binding site for NADPH. 1-deoxy-D-xylulose 5-phosphate contacts are provided by S222, N227, K228, and E231. E231 contributes to the Mn(2+) binding site.

This sequence belongs to the DXR family. In terms of assembly, homodimer. Mg(2+) is required as a cofactor. Mn(2+) serves as cofactor.

The catalysed reaction is 2-C-methyl-D-erythritol 4-phosphate + NADP(+) = 1-deoxy-D-xylulose 5-phosphate + NADPH + H(+). Its pathway is isoprenoid biosynthesis; isopentenyl diphosphate biosynthesis via DXP pathway; isopentenyl diphosphate from 1-deoxy-D-xylulose 5-phosphate: step 1/6. Its function is as follows. Catalyzes the NADPH-dependent rearrangement and reduction of 1-deoxy-D-xylulose-5-phosphate (DXP) to 2-C-methyl-D-erythritol 4-phosphate (MEP). The sequence is that of 1-deoxy-D-xylulose 5-phosphate reductoisomerase from Photorhabdus laumondii subsp. laumondii (strain DSM 15139 / CIP 105565 / TT01) (Photorhabdus luminescens subsp. laumondii).